The primary structure comprises 284 residues: Protein SCO1 homolog, mitochondrial (284 aa).

A disordered region spans residues 46–73; the sequence is RAFSAGPPPPGAGPEPKGGQAGSHRPKP. The helical transmembrane segment at 81–98 threads the bilayer; it reads LALTFAIGGSLLAGMKYF. The Mitochondrial intermembrane segment spans residues 99–284; sequence KKEKIEKLEK…AHMRSHMKKR (186 aa). Positions 101-114 are important for dimerization; it reads EKIEKLEKQRHRSI. Positions 152, 156, and 243 each coordinate Cu cation. C152 and C156 are joined by a disulfide.

The protein belongs to the SCO1/2 family. As to quaternary structure, homodimer. Interacts with COA6. Found in a complex with TMEM177, COX20, COA6, MT-CO2/COX2, COX18 and SCO2. Interacts with TMEM177 in a COX20-dependent manner. Interacts with COX20 in a MT-CO2/COX2- and COX18-dependent manner. Interacts with COX16.

It is found in the mitochondrion. The protein resides in the mitochondrion inner membrane. Functionally, copper metallochaperone essential for the maturation of cytochrome c oxidase subunit II (MT-CO2/COX2). Not required for the synthesis of MT-CO2/COX2 but plays a crucial role in stabilizing MT-CO2/COX2 during its subsequent maturation. Involved in transporting copper to the Cu(A) site on MT-CO2/COX2. Plays an important role in the regulation of copper homeostasis by controlling the abundance and cell membrane localization of copper transporter CTR1. This chain is Protein SCO1 homolog, mitochondrial (Sco1), found in Mus musculus (Mouse).